The following is a 534-amino-acid chain: GMP synthase [glutamine-hydrolyzing] (534 aa).

Residues 20–210 (MLIILDFGSQ…VYHICDCEPT (191 aa)) form the Glutamine amidotransferase type-1 domain. Cysteine 97 functions as the Nucleophile in the catalytic mechanism. Residues histidine 184 and glutamate 186 contribute to the active site. Residues 211 to 409 (WTTETFVEEA…LGLPEEIVKR (199 aa)) enclose the GMPS ATP-PPase domain. Residue 238–244 (SGGVDSS) participates in ATP binding.

In terms of assembly, homodimer.

It catalyses the reaction XMP + L-glutamine + ATP + H2O = GMP + L-glutamate + AMP + diphosphate + 2 H(+). The protein operates within purine metabolism; GMP biosynthesis; GMP from XMP (L-Gln route): step 1/1. Catalyzes the synthesis of GMP from XMP. The chain is GMP synthase [glutamine-hydrolyzing] from Synechococcus sp. (strain ATCC 27144 / PCC 6301 / SAUG 1402/1) (Anacystis nidulans).